The following is a 355-amino-acid chain: Holliday junction branch migration complex subunit RuvB (355 aa).

The tract at residues 1 to 43 is disordered; sequence MEEMDDFTVRRGEREDITGAAGPPEERPLDPAAFEEDDEPTLR. The interval 4–203 is large ATPase domain (RuvB-L); the sequence is MDDFTVRRGE…FGFSARLDYY (200 aa). Basic and acidic residues predominate over residues 7 to 17; the sequence is FTVRRGEREDI. Residues Leu-42, Arg-43, Gly-84, Lys-87, Thr-88, Ser-89, 150–152, Arg-193, Tyr-203, and Arg-240 each bind ATP; that span reads EDF. Thr-88 serves as a coordination point for Mg(2+). The interval 204–274 is small ATPAse domain (RuvB-S); it reads EPHELEKIVV…TANAALEMQG (71 aa). A head domain (RuvB-H) region spans residues 277 to 355; sequence HLGLDRTDRE…HLGFPVRDGG (79 aa). DNA contacts are provided by Arg-313, Arg-332, and Arg-337.

The protein belongs to the RuvB family. Homohexamer. Forms an RuvA(8)-RuvB(12)-Holliday junction (HJ) complex. HJ DNA is sandwiched between 2 RuvA tetramers; dsDNA enters through RuvA and exits via RuvB. An RuvB hexamer assembles on each DNA strand where it exits the tetramer. Each RuvB hexamer is contacted by two RuvA subunits (via domain III) on 2 adjacent RuvB subunits; this complex drives branch migration. In the full resolvosome a probable DNA-RuvA(4)-RuvB(12)-RuvC(2) complex forms which resolves the HJ.

Its subcellular location is the cytoplasm. The enzyme catalyses ATP + H2O = ADP + phosphate + H(+). In terms of biological role, the RuvA-RuvB-RuvC complex processes Holliday junction (HJ) DNA during genetic recombination and DNA repair, while the RuvA-RuvB complex plays an important role in the rescue of blocked DNA replication forks via replication fork reversal (RFR). RuvA specifically binds to HJ cruciform DNA, conferring on it an open structure. The RuvB hexamer acts as an ATP-dependent pump, pulling dsDNA into and through the RuvAB complex. RuvB forms 2 homohexamers on either side of HJ DNA bound by 1 or 2 RuvA tetramers; 4 subunits per hexamer contact DNA at a time. Coordinated motions by a converter formed by DNA-disengaged RuvB subunits stimulates ATP hydrolysis and nucleotide exchange. Immobilization of the converter enables RuvB to convert the ATP-contained energy into a lever motion, pulling 2 nucleotides of DNA out of the RuvA tetramer per ATP hydrolyzed, thus driving DNA branch migration. The RuvB motors rotate together with the DNA substrate, which together with the progressing nucleotide cycle form the mechanistic basis for DNA recombination by continuous HJ branch migration. Branch migration allows RuvC to scan DNA until it finds its consensus sequence, where it cleaves and resolves cruciform DNA. The chain is Holliday junction branch migration complex subunit RuvB from Rubrobacter xylanophilus (strain DSM 9941 / JCM 11954 / NBRC 16129 / PRD-1).